Here is a 116-residue protein sequence, read N- to C-terminus: Flagellar transcriptional regulator FlhD (116 aa).

The protein belongs to the FlhD family. Homodimer; disulfide-linked. Forms a heterohexamer composed of two FlhC and four FlhD subunits. Each FlhC binds a FlhD dimer, forming a heterotrimer, and a hexamer assembles by dimerization of two heterotrimers.

Its subcellular location is the cytoplasm. Functionally, functions in complex with FlhC as a master transcriptional regulator that regulates transcription of several flagellar and non-flagellar operons by binding to their promoter region. Activates expression of class 2 flagellar genes, including fliA, which is a flagellum-specific sigma factor that turns on the class 3 genes. Also regulates genes whose products function in a variety of physiological pathways. In Pectobacterium carotovorum subsp. carotovorum (strain PC1), this protein is Flagellar transcriptional regulator FlhD.